A 303-amino-acid polypeptide reads, in one-letter code: Aspartate carbamoyltransferase catalytic subunit (303 aa).

Residues Arg-48 and Thr-49 each coordinate carbamoyl phosphate. Lys-76 provides a ligand contact to L-aspartate. The carbamoyl phosphate site is built by Arg-98, His-129, and Gln-132. L-aspartate-binding residues include Arg-162 and Arg-214. Residues Ala-257 and Pro-258 each contribute to the carbamoyl phosphate site.

This sequence belongs to the aspartate/ornithine carbamoyltransferase superfamily. ATCase family. Heterododecamer (2C3:3R2) of six catalytic PyrB chains organized as two trimers (C3), and six regulatory PyrI chains organized as three dimers (R2).

It carries out the reaction carbamoyl phosphate + L-aspartate = N-carbamoyl-L-aspartate + phosphate + H(+). It participates in pyrimidine metabolism; UMP biosynthesis via de novo pathway; (S)-dihydroorotate from bicarbonate: step 2/3. Functionally, catalyzes the condensation of carbamoyl phosphate and aspartate to form carbamoyl aspartate and inorganic phosphate, the committed step in the de novo pyrimidine nucleotide biosynthesis pathway. This Leuconostoc citreum (strain KM20) protein is Aspartate carbamoyltransferase catalytic subunit.